We begin with the raw amino-acid sequence, 81 residues long: Large ribosomal subunit protein uL29c (81 aa).

Belongs to the universal ribosomal protein uL29 family.

Its subcellular location is the plastid. The protein resides in the chloroplast. The chain is Large ribosomal subunit protein uL29c from Phaeodactylum tricornutum (strain CCAP 1055/1).